The following is a 625-amino-acid chain: Exonuclease mut-7 homolog (625 aa).

Residue Ser-17 is modified to Phosphoserine. Residues 410-602 enclose the 3'-5' exonuclease domain; the sequence is LIIVNKADEF…IYNTLIERVS (193 aa).

The protein belongs to the mut-7 family. As to quaternary structure, interacts with AGO1; the interaction is not RNA dependent. Mg(2+) is required as a cofactor.

Its function is as follows. Possesses 3'-5' exoribonuclease activity. Required for 3'-end trimming of AGO1-bound miRNAs, in particular multiple-isoform miRNAs, which represents a critical step in miRNA maturation. The chain is Exonuclease mut-7 homolog (Nbr) from Drosophila melanogaster (Fruit fly).